We begin with the raw amino-acid sequence, 229 residues long: MAKKKAFIPFFYFTSIVFLPWLISLCCNKSLKTWITTWWNTRQCETFLNDIQEKSVLEKFIQLEDLFQLDEMIKEYPETDLQQFRLGIHKETIQFIKIHNEYRIHTILHFSTNLISFVILSGYSFWGKEKLFILNSWVQEFLYNLSDTIKAFSILLLTDLCIGFHSPHGWELMIGYIYKDFGFAHYEQILSGLVSTFPVILDTIFKYWIFRYLNRISPSLVVIYHAIND.

Helical transmembrane passes span 6 to 26, 107 to 127, and 189 to 209; these read AFIP…ISLC, ILHF…SFWG, and ILSG…KYWI.

The protein belongs to the CemA family.

It is found in the plastid. The protein resides in the chloroplast inner membrane. The enzyme catalyses K(+)(in) + H(+)(out) = K(+)(out) + H(+)(in). Contributes to K(+)/H(+) antiport activity by supporting proton efflux to control proton extrusion and homeostasis in chloroplasts in a light-dependent manner to modulate photosynthesis. Prevents excessive induction of non-photochemical quenching (NPQ) under continuous-light conditions. Indirectly promotes efficient inorganic carbon uptake into chloroplasts. The protein is Potassium/proton antiporter CemA of Barbarea verna (Land cress).